A 142-amino-acid chain; its full sequence is Alpha-lactalbumin (142 aa).

The N-terminal stretch at 1-18 is a signal peptide; sequence MMSFVSLLLVGILFHATQ. The C-type lysozyme domain occupies 20-142; sequence EQLTKCEVFR…KLDQWLCEKL (123 aa). Cystine bridges form between C25–C139, C47–C130, C80–C96, and C92–C110. N-linked (GlcNAc...) asparagine glycans are attached at residues N64 and N93. Ca(2+)-binding residues include K98, D101, D103, D106, and D107.

It belongs to the glycosyl hydrolase 22 family. As to quaternary structure, lactose synthase (LS) is a heterodimer of a catalytic component, beta1,4-galactosyltransferase (beta4Gal-T1) and a regulatory component, alpha-lactalbumin (LA). Mammary gland specific. Secreted in milk.

The protein localises to the secreted. In terms of biological role, regulatory subunit of lactose synthase, changes the substrate specificity of galactosyltransferase in the mammary gland making glucose a good acceptor substrate for this enzyme. This enables LS to synthesize lactose, the major carbohydrate component of milk. In other tissues, galactosyltransferase transfers galactose onto the N-acetylglucosamine of the oligosaccharide chains in glycoproteins. The polypeptide is Alpha-lactalbumin (LALBA) (Bubalus bubalis (Domestic water buffalo)).